A 254-amino-acid chain; its full sequence is MIIVISPAKSQNFEPIKTAYQFTQPIFKQQIIKLINTLKHYEVEEIEKLMKISPKLAEEVFAKHNSFNPNKYDNSNAKAAIFTFSGDVYKGLEADTLDNKTIEYAQNHLLMLSGLYGLVRPLDLIQAYRLEMGTNIKIDGKILHKYWQDKITTQLNEYFSQQQNKILINLASNEYSQAIDKKSLAVKWLDIDFKENKAGAYKTIGIHAKKARGLITRYILENRIENVSDIKKFNVAGYQFNPDFSDENLLCFTR.

It belongs to the UPF0246 family.

The chain is UPF0246 protein FTM_0239 from Francisella tularensis subsp. mediasiatica (strain FSC147).